The sequence spans 322 residues: Uridylate-specific endoribonuclease EndoU (322 aa).

Residues 25 to 45 traverse the membrane as a helical segment; it reads FVIVGLLITIGILSWHFYEYF. In terms of domain architecture, EndoU spans 53-322; it reads TPDDVLTLSK…LIGTVYPDSS (270 aa). Active-site residues include H200, H215, and K259.

Belongs to the ENDOU family. Monomer. Mn(2+) serves as cofactor. As to expression, predominantly expressed in head.

Its subcellular location is the membrane. The catalysed reaction is a ribonucleotidyl-ribonucleotide-RNA = a 3'-end 2',3'-cyclophospho-ribonucleotide-RNA + a 5'-end dephospho-ribonucleoside-RNA. Endoribonuclease that cleaves single-stranded RNAs at uridylates and releases products that have 2'-3'-cyclic phosphate termini. Preferentially cleaves single stranded RNA at poly-U sites with CU, UC and AU sites cleaved less efficiently. May target mRNAs encoding proteins involved in lipid metabolism to regulate their expression. Regulates levels of TBPH protein, but not mRNA, by an as yet unknown mechanism. Important for neuronal development or function. This chain is Uridylate-specific endoribonuclease EndoU, found in Drosophila melanogaster (Fruit fly).